Reading from the N-terminus, the 433-residue chain is Peptidoglycan DD-endopeptidase ShyC (433 aa).

A helical transmembrane segment spans residues 10–30 (WLHRVLITAFSAIIVFAIFFL). Residues H299, D303, and H380 each contribute to the Zn(2+) site.

This sequence belongs to the peptidase M23B family. The cofactor is Zn(2+).

The protein localises to the cell inner membrane. It participates in cell wall degradation; peptidoglycan degradation. Reduced activity in 0.5 mM EDTA and a complete loss of activity at higher EDTA concentrations. Functionally, cell wall peptidoglycan (PG) DD-endopeptidase. Hydrolyzes peptide cross-links which covalently connect adjacent PG strands probably to allow insertion of new glycans and thus cell wall expansion. Degrades purified whole PG sacculi in vitro. The polypeptide is Peptidoglycan DD-endopeptidase ShyC (Vibrio cholerae serotype O1 (strain ATCC 39315 / El Tor Inaba N16961)).